The chain runs to 345 residues: Membrane progestin receptor alpha (345 aa).

At Met-1–Val-74 the chain is on the cytoplasmic side. Residues Trp-75–Val-95 traverse the membrane as a helical segment. Over Asp-96–His-102 the chain is Extracellular. Residues Ala-103–Ala-123 traverse the membrane as a helical segment. The Cytoplasmic segment spans residues His-124–Ser-136. Residues Phe-137–Phe-157 traverse the membrane as a helical segment. Over Tyr-158 to Lys-168 the chain is Extracellular. The chain crosses the membrane as a helical span at residues Val-169–Cys-189. The Cytoplasmic segment spans residues Tyr-190 to Gln-243. A helical transmembrane segment spans residues Val-244–Pro-264. The Extracellular segment spans residues Gly-265 to His-268. The helical transmembrane segment at Ile-269–Leu-289 threads the bilayer. Over Glu-290–Ser-315 the chain is Cytoplasmic. Residues Gly-316 to Val-336 form a helical membrane-spanning segment. At Arg-337–Lys-345 the chain is on the extracellular side.

The protein belongs to the ADIPOR family. As to expression, detected in most adult tissues. Higher expression found in white fat and liver than brown fat and skeletal muscle.

Its subcellular location is the cell membrane. In terms of biological role, plasma membrane progesterone (P4) receptor coupled to G proteins. Seems to act through a G(i) mediated pathway. May be involved in oocyte maturation. Involved in neurosteroid inhibition of apoptosis. Also binds dehydroepiandrosterone (DHEA), pregnanolone, pregnenolone and allopregnanolone. The polypeptide is Membrane progestin receptor alpha (Mus musculus (Mouse)).